The chain runs to 281 residues: Bifunctional protein FolD (281 aa).

NADP(+) is bound by residues glycine 165–glycine 167, threonine 192, and valine 233.

The protein belongs to the tetrahydrofolate dehydrogenase/cyclohydrolase family. In terms of assembly, homodimer.

The enzyme catalyses (6R)-5,10-methylene-5,6,7,8-tetrahydrofolate + NADP(+) = (6R)-5,10-methenyltetrahydrofolate + NADPH. It catalyses the reaction (6R)-5,10-methenyltetrahydrofolate + H2O = (6R)-10-formyltetrahydrofolate + H(+). It participates in one-carbon metabolism; tetrahydrofolate interconversion. In terms of biological role, catalyzes the oxidation of 5,10-methylenetetrahydrofolate to 5,10-methenyltetrahydrofolate and then the hydrolysis of 5,10-methenyltetrahydrofolate to 10-formyltetrahydrofolate. The protein is Bifunctional protein FolD of Corynebacterium diphtheriae (strain ATCC 700971 / NCTC 13129 / Biotype gravis).